Consider the following 235-residue polypeptide: Elongation factor Tu, chloroplastic (235 aa).

The tr-type G domain maps to 1–125 (KNMITGAAQM…AVDSYIPTPE (125 aa)). 47-50 (NKED) is a GTP binding site.

It belongs to the TRAFAC class translation factor GTPase superfamily. Classic translation factor GTPase family. EF-Tu/EF-1A subfamily.

Its subcellular location is the plastid. The protein localises to the chloroplast. The enzyme catalyses GTP + H2O = GDP + phosphate + H(+). Its function is as follows. GTP hydrolase that promotes the GTP-dependent binding of aminoacyl-tRNA to the A-site of ribosomes during protein biosynthesis. The protein is Elongation factor Tu, chloroplastic (tufA) of Mantoniella squamata (Unicellular alga).